The primary structure comprises 274 residues: 4-diphosphocytidyl-2-C-methyl-D-erythritol kinase (274 aa).

Lys-8 is a catalytic residue. Pro-94–Ala-104 is an ATP binding site. Asp-136 is a catalytic residue.

This sequence belongs to the GHMP kinase family. IspE subfamily.

It catalyses the reaction 4-CDP-2-C-methyl-D-erythritol + ATP = 4-CDP-2-C-methyl-D-erythritol 2-phosphate + ADP + H(+). The protein operates within isoprenoid biosynthesis; isopentenyl diphosphate biosynthesis via DXP pathway; isopentenyl diphosphate from 1-deoxy-D-xylulose 5-phosphate: step 3/6. Its function is as follows. Catalyzes the phosphorylation of the position 2 hydroxy group of 4-diphosphocytidyl-2C-methyl-D-erythritol. The protein is 4-diphosphocytidyl-2-C-methyl-D-erythritol kinase of Bacteroides fragilis (strain ATCC 25285 / DSM 2151 / CCUG 4856 / JCM 11019 / LMG 10263 / NCTC 9343 / Onslow / VPI 2553 / EN-2).